A 196-amino-acid polypeptide reads, in one-letter code: 3-isopropylmalate dehydratase small subunit (196 aa).

The protein belongs to the LeuD family. LeuD type 1 subfamily. In terms of assembly, heterodimer of LeuC and LeuD.

The enzyme catalyses (2R,3S)-3-isopropylmalate = (2S)-2-isopropylmalate. It functions in the pathway amino-acid biosynthesis; L-leucine biosynthesis; L-leucine from 3-methyl-2-oxobutanoate: step 2/4. Catalyzes the isomerization between 2-isopropylmalate and 3-isopropylmalate, via the formation of 2-isopropylmaleate. The chain is 3-isopropylmalate dehydratase small subunit from Herpetosiphon aurantiacus (strain ATCC 23779 / DSM 785 / 114-95).